A 214-amino-acid chain; its full sequence is uncharacterized protein (214 aa).

The stretch at 39–68 (KLRSKKEVEEKIKEVDRELEEVVNAGVSIN) forms a coiled coil. The span at 99–114 (EIKVEAPEPDEEKLPD) shows a compositional bias: basic and acidic residues. Positions 99 to 162 (EIKVEAPEPD…EEVEFDEEDD (64 aa)) are disordered. A compositionally biased stretch (acidic residues) spans 123–162 (SDLDMDFEDLGQEIPLDADEQEEEEEEEEVEEVEFDEEDD). Residues 138–212 (LDADEQEEEE…IQRLKVLSGG (75 aa)) adopt a coiled-coil conformation.

This is an uncharacterized protein from Archaeoglobus fulgidus (strain ATCC 49558 / DSM 4304 / JCM 9628 / NBRC 100126 / VC-16).